The primary structure comprises 1287 residues: Pullulanase A (1287 aa).

An N-terminal signal peptide occupies residues 1–44 (MRKTPSHTEKKMVYSIRSLKNGTGSVLIGASLVLLAMATPTISS). The interval 42-139 (ISSDESTPTT…VTTETKAEEP (98 aa)) is disordered. The segment covering 48–61 (TPTTNEPNNRNTTT) has biased composition (low complexity). Residues 79–90 (DISSPGNANASL) show a composition bias toward polar residues. Composition is skewed to low complexity over residues 99-113 (TEPT…DPAP) and 122-133 (EPTTSTSPVTTE). Residues 163–165 (WTW), Trp-175, Asp-221, 270–272 (WYW), Trp-283, Lys-325, and Asn-330 contribute to the substrate site. Ca(2+) contacts are provided by Ser-668 and Tyr-670. Substrate contacts are provided by residues 674–675 (YD) and Phe-750. Asp-785 serves as the catalytic Nucleophile. Glu-814 serves as the catalytic Proton donor. Trp-816 provides a ligand contact to substrate. Positions 835, 838, and 839 each coordinate Ca(2+). Substrate is bound by residues Asp-846, Arg-849, and Tyr-856. Residues Asp-889 and Asp-893 each coordinate Ca(2+). Residues Asn-903, Lys-976, and 996 to 998 (DSY) contribute to the substrate site. A Ca(2+)-binding site is contributed by Asp-999. Positions 1147 to 1255 (VSQNGTSHES…TPDRQAELPN (109 aa)) are disordered. Over residues 1156-1203 (STAEEKPDSTPSKPEHQNEASHPAHQDPAPEARPDSTKPDAKVADAEN) the composition is skewed to basic and acidic residues. Over residues 1212 to 1225 (SQAEQPAQEAQASS) the composition is skewed to low complexity. A compositionally biased stretch (basic and acidic residues) spans 1228–1239 (EAVRKESVENSS). The LPXTG sorting signal motif lies at 1253–1257 (LPNTG). Thr-1256 carries the pentaglycyl murein peptidoglycan amidated threonine modification. A propeptide spans 1257–1287 (GIKNENKLLFAGISLLALLGLGFLLKNKKEN) (removed by sortase).

Belongs to the glycosyl hydrolase 13 family.

Its subcellular location is the secreted. The protein localises to the cell wall. It localises to the cell surface. It carries out the reaction Hydrolysis of (1-&gt;6)-alpha-D-glucosidic linkages in pullulan, amylopectin and glycogen, and in the alpha- and beta-limit dextrins of amylopectin and glycogen.. Inhibited by 4-O-alpha-D-glucopyranosylmoranoline (G1M). Its function is as follows. Virulence factor. Involved in the degradation of glycogen of the mammalian host cells. Hydrolyzes the alpha-1,6-branchpoints of glycogen. Hydrolyzes pullulan. Does not hydrolyze dextran. Binds to mouse lung alveolar type II cells that are rich in glycogen stores. Is an alpha-glucan-specific carbohydrate-binding protein, which binds to amylose (pure alpha-(1,4)-linked glucose), amylopectin (alpha-(1,4)-linked glucose with alpha-(1,6) branch points), pullulan (linear polymer of mixed alpha-(1,4)- and alpha-(1,6)-linked glucose) and glycogen (similar to amylopectin with more frequent alpha-(1,6) branch points) in vitro. Does not bind to dextran (a linear polymer of alpha-(1,6)-linked glucose). This Streptococcus pneumoniae protein is Pullulanase A.